Here is a 210-residue protein sequence, read N- to C-terminus: Small ribosomal subunit protein bS6 (210 aa).

The tract at residues 99 to 210 (PLPTKRNTKS…KDTKEVKEEG (112 aa)) is disordered. Over residues 120–210 (NDTKEVKEAK…KDTKEVKEEG (91 aa)) the composition is skewed to basic and acidic residues.

It belongs to the bacterial ribosomal protein bS6 family.

In terms of biological role, binds together with bS18 to 16S ribosomal RNA. This Prochlorococcus marinus (strain SARG / CCMP1375 / SS120) protein is Small ribosomal subunit protein bS6.